The chain runs to 346 residues: 4-hydroxy-2-oxovalerate aldolase (346 aa).

A Pyruvate carboxyltransferase domain is found at 8–260 (VILHDMSLRD…ETGIDLYKIM (253 aa)). 16–17 (RD) contributes to the substrate binding site. Asp17 contacts Mn(2+). His20 acts as the Proton acceptor in catalysis. Residues Ser170 and His199 each coordinate substrate. Positions 199 and 201 each coordinate Mn(2+). Position 290 (Tyr290) interacts with substrate.

Belongs to the 4-hydroxy-2-oxovalerate aldolase family.

The catalysed reaction is (S)-4-hydroxy-2-oxopentanoate = acetaldehyde + pyruvate. The protein operates within aromatic compound metabolism; naphthalene degradation. The sequence is that of 4-hydroxy-2-oxovalerate aldolase (nahM) from Pseudomonas putida (Arthrobacter siderocapsulatus).